A 255-amino-acid chain; its full sequence is Arginine-binding extracellular protein ArtP (255 aa).

The N-terminal stretch at 1-19 (MKKWLLLLVAACITFALTA) is a signal peptide. Cys20 is lipidated: N-palmitoyl cysteine. The S-diacylglycerol cysteine moiety is linked to residue Cys20.

Belongs to the bacterial solute-binding protein 3 family.

It is found in the cell membrane. Functionally, part of a binding-protein-dependent transport system for arginine. This chain is Arginine-binding extracellular protein ArtP (artP), found in Bacillus subtilis (strain 168).